The chain runs to 424 residues: uncharacterized protein (424 aa).

Transmembrane regions (helical) follow at residues 9 to 29, 41 to 61, 86 to 106, 119 to 139, 148 to 168, 184 to 204, 222 to 242, 270 to 290, 320 to 340, 345 to 365, and 377 to 397; these read ITWIQGTALTIGAVLGCGILI, ASLFVWVFMSFLSFFLVGTLA, GAILGWIMLGSVPIGVPIIAL, ADWQITLIAGCMLAISILLHM, ISTLVICVIVFLLVTSIAVSL, WSAAGSVSVMIFFSFVGWEMI, LFLAASCVAGLYIMLSFVTVG, VTVCLALFITFATIHANIAGF, VLTAMAAVFGLVLAAHGLFQI, LLKGPSAAFIASYICTMAAAL, and MALGAFVACAVIYSFSGWALL.

The protein belongs to the amino acid-polyamine-organocation (APC) superfamily.

It is found in the cell membrane. This is an uncharacterized protein from Bacillus subtilis (strain 168).